Reading from the N-terminus, the 520-residue chain is 2-isopropylmalate synthase (520 aa).

The region spanning 5-268 is the Pyruvate carboxyltransferase domain; it reads VYIFDTTLRD…YTDVNTKEIY (264 aa). Mn(2+) is bound by residues Asp14, His202, His204, and Asn238. Positions 394 to 520 are regulatory domain; it reads KVLHFQVQSG…RQEIREEGTV (127 aa).

It belongs to the alpha-IPM synthase/homocitrate synthase family. LeuA type 1 subfamily. As to quaternary structure, homodimer. It depends on Mn(2+) as a cofactor.

The protein localises to the cytoplasm. It catalyses the reaction 3-methyl-2-oxobutanoate + acetyl-CoA + H2O = (2S)-2-isopropylmalate + CoA + H(+). Its pathway is amino-acid biosynthesis; L-leucine biosynthesis; L-leucine from 3-methyl-2-oxobutanoate: step 1/4. Its function is as follows. Catalyzes the condensation of the acetyl group of acetyl-CoA with 3-methyl-2-oxobutanoate (2-ketoisovalerate) to form 3-carboxy-3-hydroxy-4-methylpentanoate (2-isopropylmalate). The sequence is that of 2-isopropylmalate synthase from Aquifex aeolicus (strain VF5).